The following is a 187-amino-acid chain: Large ribosomal subunit protein bL17 (187 aa).

Belongs to the bacterial ribosomal protein bL17 family. In terms of assembly, part of the 50S ribosomal subunit. Contacts protein L32.

In Rhodococcus opacus (strain B4), this protein is Large ribosomal subunit protein bL17.